Here is a 1275-residue protein sequence, read N- to C-terminus: ATP-dependent helicase/nuclease subunit A (1275 aa).

The UvrD-like helicase ATP-binding domain maps to 4–481; that stretch reads PKWTKEQLEV…IMLYKNFRSR (478 aa). 25 to 32 is a binding site for ATP; the sequence is AAAGSGKT. Residues 531 to 839 enclose the UvrD-like helicase C-terminal domain; it reads TEIHLIQKDN…RIMSIHKSKG (309 aa).

It belongs to the helicase family. AddA subfamily. Heterodimer of AddA and AddB/RexB. It depends on Mg(2+) as a cofactor.

The enzyme catalyses Couples ATP hydrolysis with the unwinding of duplex DNA by translocating in the 3'-5' direction.. It carries out the reaction ATP + H2O = ADP + phosphate + H(+). Its function is as follows. The heterodimer acts as both an ATP-dependent DNA helicase and an ATP-dependent, dual-direction single-stranded exonuclease. Recognizes the chi site generating a DNA molecule suitable for the initiation of homologous recombination. The AddA nuclease domain is required for chi fragment generation; this subunit has the helicase and 3' -&gt; 5' nuclease activities. This Clostridioides difficile (strain 630) (Peptoclostridium difficile) protein is ATP-dependent helicase/nuclease subunit A.